The chain runs to 378 residues: Erythronate-4-phosphate dehydrogenase (378 aa).

Positions 45 and 66 each coordinate substrate. 2 residues coordinate NAD(+): Asp-146 and Thr-175. Arg-208 is a catalytic residue. An NAD(+)-binding site is contributed by Asp-232. Glu-237 is an active-site residue. The active-site Proton donor is the His-254. Gly-257 is an NAD(+) binding site. Substrate is bound at residue Tyr-258.

The protein belongs to the D-isomer specific 2-hydroxyacid dehydrogenase family. PdxB subfamily. Homodimer.

It is found in the cytoplasm. The enzyme catalyses 4-phospho-D-erythronate + NAD(+) = (R)-3-hydroxy-2-oxo-4-phosphooxybutanoate + NADH + H(+). Its pathway is cofactor biosynthesis; pyridoxine 5'-phosphate biosynthesis; pyridoxine 5'-phosphate from D-erythrose 4-phosphate: step 2/5. Functionally, catalyzes the oxidation of erythronate-4-phosphate to 3-hydroxy-2-oxo-4-phosphonooxybutanoate. The protein is Erythronate-4-phosphate dehydrogenase of Escherichia coli (strain 55989 / EAEC).